The following is an 898-amino-acid chain: MVWDRQTKMEYEWKPDEQGLQQILQLLKESQSPDTTIQRTVQQKLEQLNQYPDFNNYLIFVLTKLKSEDEPTRSLSGLILKNNVKAHFQNFPNGVTDFIKSECLNNIGDSSPLIRATVGILITTIASKGELQNWPDLLPKLCSLLDSEDYNTCEGAFGALQKICEDSAEILDSDVLDRPLNIMIPKFLQFFKHSSPKIRSHAVACVNQFIISRTQALMLHIDSFIENLFALAGDEEAEVRKNVCRALVMLLEVRMDRLLPHMHNIVEYMLQRTQDQDENVALEACEFWLTLAEQPICKDVLVRHLPKLIPVLVNGMKYSDIDIILLKGDVEEDETIPDSEQDIRPRFHRSRTVAQQHEEDGIEEEDDDDDEIDDDDTISDWNLRKCSAAALDVLANVYRDELLPHILPLLKELLFHHEWVVKESGILVLGAIAEGCMQGMIPYLPELIPHLIQCLSDKKALVRSITCWTLSRYAHWVVSQPPDTYLKPLMTELLKRILDSNKRVQEAACSAFATLEEEACTELVPYLAYILDTLVFAFSKYQHKNLLILYDAIGTLADSVGHHLNKPEYIQMLMPPLIQKWNMLKDEDKDLFPLLECLSSVATALQSGFLPYCEPVYQRCVNLVQKTLAQAMLNNAQPEQYEAPDKDFMIVALDLLSGLAEGLGGNIEQLVARSNILTLMYQCMQDKMPEVRQSSFALLGDLTKACFQHVKPCIADFMPILGTNLNPEFISVCNNATWAIGEISIQMGIEMQPYIPMVLHQLVEIINRPNTPKTLLENTAITIGRLGYVCPQEVAPMLQQFIRPWCTSLRNIRDNEEKDSAFRGICTMISVNPSGVIQDFIFFCDAVASWINPKDDLRDMFCKILHGFKNQVGDENWRRFSDQFPLPLKERLAAFYGV.

HEAT repeat units follow at residues 19 to 46 (GLQQILQLLKESQSPDTTIQRTVQQKLE), 51 to 89 (YPDFNNYLIFVLTKLKSEDEPTRSLSGLILKNNVKAHFQ), 98 to 131 (FIKSECLNNIGDSSPLIRATVGILITTIASKGEL), 137 to 174 (LLPKLCSLLDSEDYNTCEGAFGALQKICEDSAEILDSD), 181 to 211 (NIMIPKFLQFFKHSSPKIRSHAVACVNQFII), 224 to 251 (FIENLFALAGDEEAEVRKNVCRALVMLL), 263 to 290 (HNIVEYMLQRTQDQDENVALEACEFWLT), 306 to 397 (PKLI…LANV), 405 to 433 (HILPLLKELLFHHEWVVKESGILVLGAIA), 445 to 472 (PELIPHLIQCLSDKKALVRSITCWTLSR), 486 to 519 (LKPLMTELLKRILDSNKRVQEAACSAFATLEEEA), 527 to 560 (LAYILDTLVFAFSKYQHKNLLILYDAIGTLADSV), 568 to 606 (EYIQMLMPPLIQKWNMLKDEDKDLFPLLECLSSVATALQ), 614 to 665 (EPVY…GLGG), 676 to 707 (ILTLMYQCMQDKMPEVRQSSFALLGDLTKACF), 715 to 748 (ADFMPILGTNLNPEFISVCNNATWAIGEISIQMG), 756 to 791 (PMVLHQLVEIINRPNTPKTLLENTAITIGRLGYVCP), 799 to 832 (QQFIRPWCTSLRNIRDNEEKDSAFRGICTMISVN), 841 to 872 (IFFCDAVASWINPKDDLRDMFCKILHGFKNQV), and 875 to 895 (ENWRRFSDQFPLPLKERLAAF). The Importin N-terminal domain occupies 41–109 (VQQKLEQLNQ…KSECLNNIGD (69 aa)). The segment at 347-374 (FHRSRTVAQQHEEDGIEEEDDDDDEIDD) is disordered. Residues 360–374 (DGIEEEDDDDDEIDD) are compositionally biased toward acidic residues.

Belongs to the importin beta family. Importin beta-2 subfamily. Identified in a complex that contains TNPO1, RAN and RANBP1. Binds HNRPA1, HNRPA2, HNRNPDL, RPS7, RPL5 and RAN. Interacts with H2A, H2B, H3 and H4 histones. Interacts with isoform 1 and isoform 5 of ADAR/ADAR1 (via DRBM 3 domain). Interacts with SNAI1 (via zinc fingers); the interaction mediates SNAI1 nuclear import. Interacts with SNAI2 (via zinc fingers). Interacts with RPL23A (via BIB domain) and SRP19; this interaction is involved in RPL23A and SRP19 import into the nucleus. Interacts (via HEAT repeats 8-12) with BAP1 (via non-classical PY-NLS); this interaction is direct, is involved in BAP1 nuclear import and disrupts BAP1 homodimerization.

The protein localises to the cytoplasm. The protein resides in the nucleus. Functions in nuclear protein import as nuclear transport receptor. Serves as receptor for nuclear localization signals (NLS) in cargo substrates. May mediate docking of the importin/substrate complex to the nuclear pore complex (NPC) through binding to nucleoporin and the complex is subsequently translocated through the pore by an energy requiring, Ran-dependent mechanism. At the nucleoplasmic side of the NPC, Ran binds to the importin, the importin/substrate complex dissociates and importin is re-exported from the nucleus to the cytoplasm where GTP hydrolysis releases Ran. The directionality of nuclear import is thought to be conferred by an asymmetric distribution of the GTP- and GDP-bound forms of Ran between the cytoplasm and nucleus. Involved in nuclear import of M9-containing proteins. In vitro, binds directly to the M9 region of the heterogeneous nuclear ribonucleoproteins (hnRNP), A1 and A2 and mediates their nuclear import. Involved in hnRNP A1/A2 nuclear export. Mediates the nuclear import of ribosomal proteins RPL23A, RPS7 and RPL5. In vitro, mediates nuclear import of SRP19. Mediates the import of histones H2A, H2B, H3 and H4. Mediates nuclear import of ADAR/ADAR1 in a RanGTP-dependent manner. Main mediator of PR-DUB complex component BAP1 nuclear import; acts redundantly with the karyopherins KPNA1 and KPNA2. This chain is Transportin-1 (Tnpo1), found in Mus musculus (Mouse).